Reading from the N-terminus, the 1271-residue chain is Protein flightless-1 homolog (1271 aa).

The residue at position 1 (Met1) is an N-acetylmethionine. The segment at 1-427 is interaction with LRRFIP1 and LRRFIP2; the sequence is MEATGVLPFV…SGSKDPLARK (427 aa). LRR repeat units lie at residues 7–32, 33–55, 56–78, 80–103, 104–126, 127–149, 150–173, 175–196, 197–222, 223–245, 247–268, 269–291, 293–316, 317–339, 340–363, and 365–385; these read LPFV…VKAM, TSLR…LAAL, QKLE…LSSL, SLRA…IFKL, DDLS…LENA, KNML…LFIN, LTDL…MRRL, HLQT…QLPA, MMAL…LEGL, SNLS…LYTL, SLRR…IDQW, VHLE…ICKL, KLKK…IGKL, TSLE…LCRC, PKLK…HFLT, and IQVL…PADR. An N6-acetyllysine modification is found at Lys21. At Ser406 the chain carries Phosphoserine. Phosphoserine; by SGK3 is present on Ser436. Positions 495-827 are interaction with ACTL6A; sequence VGQLPGLTIW…VVSRSLEGTE (333 aa). 3 Gelsolin-like repeats span residues 509–591, 629–703, and 759–831; these read FVPV…EEFL, NIKL…PGFW, and LMPG…AQVF. Phosphoserine is present on Ser860. The interval 951–977 is disordered; it reads KTEDKEGKASAEAREGEEAAAEAEEKQ. The segment covering 952 to 967 has biased composition (basic and acidic residues); the sequence is TEDKEGKASAEAREGE. Residues 968 to 977 are compositionally biased toward acidic residues; it reads EAAAEAEEKQ. The Gelsolin-like 4 repeat unit spans residues 1183–1256; it reads KCSDFCQDDL…VRKGNEQRAF (74 aa).

As to quaternary structure, interacts with actin, ACTL6A and NCOA2. Interacts with CARM1. Interacts with LRRFIP1, LRRFIP2 and MYD88. Upon LPS stimulation, LRRFIP2 competes for MYD88-binding; LRRFIP1 constitutively blocks the interaction with MyD88, even in the absence of LPS. Interacts with the nuclear receptors ESR1 and THRB. Interacts with SGK3. Interacts (via the gelsolin-like region) with TMOD1 and TMOD3. Interacts with LMOD2, VCL, GSN and DES. In terms of tissue distribution, expressed in blastocyst.

Its subcellular location is the nucleus. The protein resides in the cytoplasm. It is found in the cytoskeleton. It localises to the microtubule organizing center. The protein localises to the centrosome. Its subcellular location is the cell junction. The protein resides in the focal adhesion. It is found in the cell projection. It localises to the podosome. In terms of biological role, is a regulator of actin polymerization, required for proper myofibril organization and regulation of the length of sarcomeric thin filaments. It also plays a role in the assembly of cardiomyocyte cell adhesion complexes. Regulates cytoskeletal rearrangements involved in cytokinesis and cell migration, by inhibiting Rac1-dependent paxillin phosphorylation. May play a role as coactivator in transcriptional activation by hormone-activated nuclear receptors (NR) and acts in cooperation with NCOA2 and CARM1. Involved in estrogen hormone signaling. This is Protein flightless-1 homolog (Flii) from Mus musculus (Mouse).